Here is an 89-residue protein sequence, read N- to C-terminus: Defensin-like protein 197 (89 aa).

A signal peptide spans 1 to 26 (MKFVSVFLVLFIFFLVVLEAPEKIEA). 4 cysteine pairs are disulfide-bonded: C33-C86, C46-C70, C55-C81, and C59-C83.

Belongs to the DEFL family. Protease inhibitor I18 (RTI/MTI-2) subfamily.

It is found in the secreted. The polypeptide is Defensin-like protein 197 (ATTI6) (Arabidopsis thaliana (Mouse-ear cress)).